Here is a 621-residue protein sequence, read N- to C-terminus: Glutamyl-tRNA(Gln) amidotransferase subunit B, mitochondrial (621 aa).

Residues 1–41 (MARLPTTELRKYLLTGQFTRRGCLHLRPSPLAPPIPPLRTL) constitute a mitochondrion transit peptide. Disordered regions lie at residues 26–86 (LRPS…DNQT) and 106–136 (SKLFSPASTPSSSSDDAVHHHHPNTHVAPFD). Composition is skewed to low complexity over residues 38–57 (LRTLSTTPPTPSDQQPQIIP) and 110–120 (SPASTPSSSSD).

It belongs to the GatB/GatE family. GatB subfamily. As to quaternary structure, subunit of the heterotrimeric GatCAB amidotransferase (AdT) complex, composed of A, B and C subunits.

Its subcellular location is the mitochondrion. The catalysed reaction is L-glutamyl-tRNA(Gln) + L-glutamine + ATP + H2O = L-glutaminyl-tRNA(Gln) + L-glutamate + ADP + phosphate + H(+). In terms of biological role, allows the formation of correctly charged Gln-tRNA(Gln) through the transamidation of misacylated Glu-tRNA(Gln) in the mitochondria. The reaction takes place in the presence of glutamine and ATP through an activated gamma-phospho-Glu-tRNA(Gln). The sequence is that of Glutamyl-tRNA(Gln) amidotransferase subunit B, mitochondrial from Podospora anserina (strain S / ATCC MYA-4624 / DSM 980 / FGSC 10383) (Pleurage anserina).